Consider the following 320-residue polypeptide: Cilia- and flagella-associated protein 77 (320 aa).

Residues 1–27 (MPEARSSGPDLTRWRKQQQPVRRTVSQ) form a disordered region. Positions 17-27 (QQQPVRRTVSQ) are enriched in polar residues.

The protein belongs to the CFAP77 family. As to quaternary structure, microtubule inner protein component of sperm flagellar doublet microtubules. In terms of tissue distribution, expressed in airway epithelial cells.

The protein localises to the cytoplasm. Its subcellular location is the cytoskeleton. It is found in the cilium axoneme. The protein resides in the flagellum axoneme. Its function is as follows. Microtubule inner protein (MIP) part of the dynein-decorated doublet microtubules (DMTs) in cilia axoneme, which is required for motile cilia beating. The chain is Cilia- and flagella-associated protein 77 from Homo sapiens (Human).